Here is a 73-residue protein sequence, read N- to C-terminus: Sec-independent protein translocase protein TatA (73 aa).

The chain crosses the membrane as a helical span at residues 1-21; that stretch reads MGSFSIWHWLIVLVIVMLVFG. A disordered region spans residues 43-73; that stretch reads MKEGDDKAAPAKELRDSTTIDVDAKEKTRQQ.

The protein belongs to the TatA/E family. As to quaternary structure, the Tat system comprises two distinct complexes: a TatABC complex, containing multiple copies of TatA, TatB and TatC subunits, and a separate TatA complex, containing only TatA subunits. Substrates initially bind to the TatABC complex, which probably triggers association of the separate TatA complex to form the active translocon.

It is found in the cell inner membrane. Its function is as follows. Part of the twin-arginine translocation (Tat) system that transports large folded proteins containing a characteristic twin-arginine motif in their signal peptide across membranes. TatA could form the protein-conducting channel of the Tat system. This Cupriavidus pinatubonensis (strain JMP 134 / LMG 1197) (Cupriavidus necator (strain JMP 134)) protein is Sec-independent protein translocase protein TatA.